A 99-amino-acid chain; its full sequence is Large ribosomal subunit protein uL23 (99 aa).

The protein belongs to the universal ribosomal protein uL23 family. Part of the 50S ribosomal subunit. Contacts protein L29, and trigger factor when it is bound to the ribosome.

One of the early assembly proteins it binds 23S rRNA. One of the proteins that surrounds the polypeptide exit tunnel on the outside of the ribosome. Forms the main docking site for trigger factor binding to the ribosome. The chain is Large ribosomal subunit protein uL23 from Xanthomonas axonopodis pv. citri (strain 306).